The following is a 217-amino-acid chain: Pyrophosphatase PpaX (217 aa).

Asp11 (nucleophile) is an active-site residue.

The protein belongs to the HAD-like hydrolase superfamily. PpaX family. Requires Mg(2+) as cofactor.

The catalysed reaction is diphosphate + H2O = 2 phosphate + H(+). In terms of biological role, hydrolyzes pyrophosphate formed during P-Ser-HPr dephosphorylation by HPrK/P. Might play a role in controlling the intracellular pyrophosphate pool. This is Pyrophosphatase PpaX from Listeria monocytogenes serotype 4b (strain CLIP80459).